Consider the following 155-residue polypeptide: MYKIQLLSCIALTLALVANGAPTSSSTGNTMKEVKSLLLDLQLLLEKVKNPENLKHSRMHTFNFYVPKVNATELKHLKCLLEELKLLEEVLNLAPSKNLNPREIKDSMDNIKRIVLELQGSETRFTCEYDDVTVKAVEFLNKWITFCQSIYSTMT.

An N-terminal signal peptide occupies residues 1–20; sequence MYKIQLLSCIALTLALVANG. O-linked (GalNAc...) threonine glycosylation is present at T23. The cysteines at positions 79 and 127 are disulfide-linked.

The protein belongs to the IL-2 family.

Its subcellular location is the secreted. Cytokine produced by activated CD4-positive helper T-cells and to a lesser extend activated CD8-positive T-cells and natural killer (NK) cells that plays pivotal roles in the immune response and tolerance. Binds to a receptor complex composed of either the high-affinity trimeric IL-2R (IL2RA/CD25, IL2RB/CD122 and IL2RG/CD132) or the low-affinity dimeric IL-2R (IL2RB and IL2RG). Interaction with the receptor leads to oligomerization and conformation changes in the IL-2R subunits resulting in downstream signaling starting with phosphorylation of JAK1 and JAK3. In turn, JAK1 and JAK3 phosphorylate the receptor to form a docking site leading to the phosphorylation of several substrates including STAT5. This process leads to activation of several pathways including STAT, phosphoinositide-3-kinase/PI3K and mitogen-activated protein kinase/MAPK pathways. Functions as a T-cell growth factor and can increase NK-cell cytolytic activity as well. Promotes strong proliferation of activated B-cells and subsequently immunoglobulin production. Plays a pivotal role in regulating the adaptive immune system by controlling the survival and proliferation of regulatory T-cells, which are required for the maintenance of immune tolerance. Moreover, participates in the differentiation and homeostasis of effector T-cell subsets, including Th1, Th2, Th17 as well as memory CD8-positive T-cells. The sequence is that of Interleukin-2 (IL2) from Boselaphus tragocamelus (Nilgai).